Reading from the N-terminus, the 327-residue chain is Thioredoxin reductase (327 aa).

Residues S10–A13, I39–A40, Q44, N53, V86, C143, D286, and R293–A295 each bind FAD. C140 and C143 are joined by a disulfide.

The protein belongs to the class-II pyridine nucleotide-disulfide oxidoreductase family. In terms of assembly, homodimer. The cofactor is FAD.

Its subcellular location is the cytoplasm. It carries out the reaction [thioredoxin]-dithiol + NADP(+) = [thioredoxin]-disulfide + NADPH + H(+). Component of the thioredoxin-thioredoxin reductase system which may be involved in biosynthesis of penicillins and cephalosporins and may be important in determining the thiol-disulfide redox balance. This Pneumocystis jirovecii (Human pneumocystis pneumonia agent) protein is Thioredoxin reductase (TRR1).